Here is a 259-residue protein sequence, read N- to C-terminus: Thiazole synthase (259 aa).

The Schiff-base intermediate with DXP role is filled by Lys-95. 1-deoxy-D-xylulose 5-phosphate is bound by residues Gly-156, 183 to 184 (AG), and 205 to 206 (NS).

Belongs to the ThiG family. In terms of assembly, homotetramer. Forms heterodimers with either ThiH or ThiS.

The protein resides in the cytoplasm. The enzyme catalyses [ThiS sulfur-carrier protein]-C-terminal-Gly-aminoethanethioate + 2-iminoacetate + 1-deoxy-D-xylulose 5-phosphate = [ThiS sulfur-carrier protein]-C-terminal Gly-Gly + 2-[(2R,5Z)-2-carboxy-4-methylthiazol-5(2H)-ylidene]ethyl phosphate + 2 H2O + H(+). Its pathway is cofactor biosynthesis; thiamine diphosphate biosynthesis. In terms of biological role, catalyzes the rearrangement of 1-deoxy-D-xylulose 5-phosphate (DXP) to produce the thiazole phosphate moiety of thiamine. Sulfur is provided by the thiocarboxylate moiety of the carrier protein ThiS. In vitro, sulfur can be provided by H(2)S. This Coxiella burnetii (strain CbuK_Q154) (Coxiella burnetii (strain Q154)) protein is Thiazole synthase.